Reading from the N-terminus, the 62-residue chain is Photosystem II reaction center protein Z (62 aa).

Helical transmembrane passes span 8–28 (AVFA…VVLA) and 41–61 (FSGA…NSFI).

It belongs to the PsbZ family. PSII is composed of 1 copy each of membrane proteins PsbA, PsbB, PsbC, PsbD, PsbE, PsbF, PsbH, PsbI, PsbJ, PsbK, PsbL, PsbM, PsbT, PsbY, PsbZ, Psb30/Ycf12, at least 3 peripheral proteins of the oxygen-evolving complex and a large number of cofactors. It forms dimeric complexes.

The protein resides in the plastid. The protein localises to the chloroplast thylakoid membrane. In terms of biological role, may control the interaction of photosystem II (PSII) cores with the light-harvesting antenna, regulates electron flow through the 2 photosystem reaction centers. PSII is a light-driven water plastoquinone oxidoreductase, using light energy to abstract electrons from H(2)O, generating a proton gradient subsequently used for ATP formation. The sequence is that of Photosystem II reaction center protein Z from Marchantia polymorpha (Common liverwort).